A 629-amino-acid polypeptide reads, in one-letter code: tRNA uridine 5-carboxymethylaminomethyl modification enzyme MnmG (629 aa).

Residue 13 to 18 (GGGHAG) coordinates FAD. Residue 273 to 287 (GPRYCPSIEDKVNRF) coordinates NAD(+).

This sequence belongs to the MnmG family. In terms of assembly, homodimer. Heterotetramer of two MnmE and two MnmG subunits. FAD is required as a cofactor.

The protein localises to the cytoplasm. In terms of biological role, NAD-binding protein involved in the addition of a carboxymethylaminomethyl (cmnm) group at the wobble position (U34) of certain tRNAs, forming tRNA-cmnm(5)s(2)U34. The polypeptide is tRNA uridine 5-carboxymethylaminomethyl modification enzyme MnmG (Shewanella pealeana (strain ATCC 700345 / ANG-SQ1)).